Consider the following 63-residue polypeptide: Large ribosomal subunit protein uL30 (63 aa).

It belongs to the universal ribosomal protein uL30 family. Part of the 50S ribosomal subunit.

The sequence is that of Large ribosomal subunit protein uL30 from Rickettsia peacockii (strain Rustic).